The sequence spans 276 residues: Glucosamine-6-phosphate deaminase 2 (276 aa).

The active-site Proton acceptor; for enolization step is the D72. A coiled-coil region spans residues 105 to 130 (HILDGNAADLQAECDAFENKIKEAGG). The For ring-opening step role is filled by D141. Residue H143 is the Proton acceptor; for ring-opening step of the active site. E148 (for ring-opening step) is an active-site residue. T161 carries the phosphothreonine modification.

Belongs to the glucosamine/galactosamine-6-phosphate isomerase family. Homohexamer. Ubiquitous, with highest expression detected in testis, ovary, placenta, and heart.

Its subcellular location is the cytoplasm. The enzyme catalyses alpha-D-glucosamine 6-phosphate + H2O = beta-D-fructose 6-phosphate + NH4(+). It functions in the pathway nucleotide-sugar biosynthesis; UDP-N-acetyl-alpha-D-glucosamine biosynthesis; alpha-D-glucosamine 6-phosphate from D-fructose 6-phosphate: step 1/1. Allosterically activated by N-acetylglucosamine-6-phosphate (GlcNAc6P). Functionally, catalyzes the reversible conversion of alpha-D-glucosamine 6-phosphate (GlcN-6P) into beta-D-fructose 6-phosphate (Fru-6P) and ammonium ion, a regulatory reaction step in de novo uridine diphosphate-N-acetyl-alpha-D-glucosamine (UDP-GlcNAc) biosynthesis via hexosamine pathway. Deamination is coupled to aldo-keto isomerization mediating the metabolic flux from UDP-GlcNAc toward Fru-6P. At high ammonium level can drive amination and isomerization of Fru-6P toward hexosamines and UDP-GlcNAc synthesis. Has a role in fine tuning the metabolic fluctuations of cytosolic UDP-GlcNAc and their effects on hyaluronan synthesis that occur during tissue remodeling. In Homo sapiens (Human), this protein is Glucosamine-6-phosphate deaminase 2.